Here is a 217-residue protein sequence, read N- to C-terminus: Probable transaldolase (217 aa).

K83 functions as the Schiff-base intermediate with substrate in the catalytic mechanism.

Belongs to the transaldolase family. Type 3B subfamily.

The protein resides in the cytoplasm. It catalyses the reaction D-sedoheptulose 7-phosphate + D-glyceraldehyde 3-phosphate = D-erythrose 4-phosphate + beta-D-fructose 6-phosphate. It functions in the pathway carbohydrate degradation; pentose phosphate pathway; D-glyceraldehyde 3-phosphate and beta-D-fructose 6-phosphate from D-ribose 5-phosphate and D-xylulose 5-phosphate (non-oxidative stage): step 2/3. Its function is as follows. Transaldolase is important for the balance of metabolites in the pentose-phosphate pathway. This is Probable transaldolase from Phenylobacterium zucineum (strain HLK1).